Here is a 275-residue protein sequence, read N- to C-terminus: UBX domain-containing protein 8 (275 aa).

Position 1 (M1) is a topological domain, cytoplasmic. The chain crosses the membrane as a helical span at residues 2-22; sequence ASRGVVGIFLLSALPLLCLEL. The Lumenal segment spans residues 23 to 33; sequence RRGKPDLGIKD. A helical membrane pass occupies residues 34 to 54; that stretch reads LILLCGRIFLLLALLTLIISV. At 55–275 the chain is on the cytoplasmic side; that stretch reads TTSWVNSFKP…LNVEEKEQSS (221 aa). Positions 137-181 are disordered; sequence DEDLELDSESQTSFETSNREAAKRRNLPNSVTNISPPAEQPTKKE. The UBX domain occupies 192-268; the sequence is TAEEVVTVAL…GITVDTVLNV (77 aa).

Interacts with SYVN1 and VCP.

The protein resides in the endoplasmic reticulum membrane. Its function is as follows. Involved in endoplasmic reticulum-associated degradation (ERAD) for misfolded lumenal proteins, possibly by tethering VCP to the endoplasmic reticulum membrane. May play a role in reproduction. May play a role in reproduction. In Bos taurus (Bovine), this protein is UBX domain-containing protein 8 (UBXN8).